Reading from the N-terminus, the 136-residue chain is UPF0213 protein ASA_0550 (136 aa).

Residues 17 to 92 (GQWSIYLVRT…KQQSKAFKER (76 aa)) form the GIY-YIG domain.

This sequence belongs to the UPF0213 family.

The chain is UPF0213 protein ASA_0550 from Aeromonas salmonicida (strain A449).